We begin with the raw amino-acid sequence, 482 residues long: Caspase-8 (482 aa).

A propeptide spanning residues 1-218 (MDFHSCLYDI…DMWDSPGEQE (218 aa)) is cleaved from the precursor. 2 DED domains span residues 2–80 (DFHS…RVLK) and 100–177 (AYRV…RIDD). Residues S188 and S213 each carry the phosphoserine modification. H319 is a catalytic residue. Residue Y336 is modified to Phosphotyrosine. Residue C362 is part of the active site. Positions 379 to 388 (LEQEHVLEED) are excised as a propeptide. S390 bears the Phosphoserine; by CDK1 mark.

This sequence belongs to the peptidase C14A family. Heterotetramer that consists of two anti-parallel arranged heterodimers, each one formed by a 18 kDa (p18) and a 10 kDa (p10) subunit. Component of the death-induced signaling complex (DISC) composed of cell surface receptor FAS/CD95 or TNFRSF1A, adapter protein FADD and the CASP8 protease; recruitment of CASP8 to the complex is required for processing of CASP8 into the p18 and p10 subunits. Component of the AIM2 PANoptosome complex, a multiprotein complex that drives inflammatory cell death (PANoptosis). Interacts with CFLAR and PEA15. Interacts with RFFL and RNF34; negatively regulate CASP8 through proteasomal degradation. Interacts with TNFAIP8L2. Interacts with CASP8AP2. Interacts with NOL3; decreases CASP8 activity in a mitochondria localization- and phosphorylation-dependent manner and this interaction is dissociated by calcium. Interacts with UBR2. Interacts with RIPK1. Interacts with stimulated TNFRSF10B; this interaction is followed by CASP8 proteolytic cleavage and activation. In terms of processing, generation of the subunits requires association with the death-inducing signaling complex (DISC), whereas additional processing is likely due to the autocatalytic activity of the activated protease. GZMB and CASP10 can be involved in these processing events. Post-translationally, phosphorylation on Ser-389 during mitosis by CDK1 inhibits activation by proteolysis and prevents apoptosis. This phosphorylation occurs in cancer cell lines, as well as in primary breast tissues and lymphocytes.

The protein resides in the cytoplasm. It localises to the nucleus. It carries out the reaction Strict requirement for Asp at position P1 and has a preferred cleavage sequence of (Leu/Asp/Val)-Glu-Thr-Asp-|-(Gly/Ser/Ala).. Its activity is regulated as follows. CASP8 activity is restricted by RIPK1. In terms of biological role, thiol protease that plays a key role in programmed cell death by acting as a molecular switch for apoptosis, necroptosis and pyroptosis, and is required to prevent tissue damage during embryonic development and adulthood. Initiator protease that induces extrinsic apoptosis by mediating cleavage and activation of effector caspases responsible for FAS/CD95-mediated and TNFRSF1A-induced cell death. Cleaves and activates effector caspases CASP3, CASP4, CASP6, CASP7, CASP9 and CASP10. Binding to the adapter molecule FADD recruits it to either receptor FAS/CD95 or TNFRSF1A. The resulting aggregate called the death-inducing signaling complex (DISC) performs CASP8 proteolytic activation. The active dimeric enzyme is then liberated from the DISC and free to activate downstream apoptotic proteases. Proteolytic fragments of the N-terminal propeptide (termed CAP3, CAP5 and CAP6) are likely retained in the DISC. In addition to extrinsic apoptosis, also acts as a negative regulator of necroptosis: acts by cleaving RIPK1 at 'Asp-325', which is crucial to inhibit RIPK1 kinase activity, limiting TNF-induced apoptosis, necroptosis and inflammatory response. Also able to initiate pyroptosis by mediating cleavage and activation of gasdermin-C and -D (GSDMC and GSDMD, respectively): gasdermin cleavage promotes release of the N-terminal moiety that binds to membranes and forms pores, triggering pyroptosis. Initiates pyroptosis following inactivation of MAP3K7/TAK1. Also acts as a regulator of innate immunity by mediating cleavage and inactivation of N4BP1 downstream of TLR3 or TLR4, thereby promoting cytokine production. May participate in the Granzyme B (GZMB) cell death pathways. Cleaves PARP1 and PARP2. This Rattus norvegicus (Rat) protein is Caspase-8.